Here is a 220-residue protein sequence, read N- to C-terminus: WAP four-disulfide core domain protein 1 (220 aa).

An N-terminal signal peptide occupies residues 1-31; that stretch reads MPLTGVGPGSCRRQIIRALCLLLLLLHAGSA. Residues 46–70 are disordered; the sequence is KSRAEEAGAPGGPRQPRADRCPPPP. The 50-residue stretch at 59–108 folds into the WAP domain; that stretch reads RQPRADRCPPPPRTLPPGACQAARCQADSECPRHRRCCYNGCAYACLEAV. Disulfide bonds link C66-C96, C78-C100, C83-C95, and C89-C104. Residues 199–220 form a disordered region; it reads EYPEGDSKNVAEPGRGQQKHFQ.

The protein resides in the secreted. Functionally, has growth inhibitory activity. In Homo sapiens (Human), this protein is WAP four-disulfide core domain protein 1 (WFDC1).